The sequence spans 413 residues: ORC1-type DNA replication protein 2 (413 aa).

ATP-binding positions include 70–74 (TGKTA), Y217, and R229.

Belongs to the CDC6/cdc18 family. In terms of assembly, monomer. Interacts with Cdc6-3, MCM and PolB1. Post-translationally, autophosphorylated in vitro.

Its function is as follows. Involved in regulation of DNA replication. May play essential roles in origin recognition and cell cycle control of replication. Binds both single-stranded and double-stranded DNA, with a preference for molecules that contain a bubble, a fork, or a tail. Has a weak ATPase activity. Stimulates the binding of the MCM helicase to the origin DNA, but strongly inhibits ATPase and DNA helicase activities of MCM. Also regulates the DNA polymerase and the nuclease activities of PolB1. This Saccharolobus solfataricus (strain ATCC 35092 / DSM 1617 / JCM 11322 / P2) (Sulfolobus solfataricus) protein is ORC1-type DNA replication protein 2 (cdc6-2).